The primary structure comprises 2517 residues: Non-reducing polyketide synthase pkbA (2517 aa).

The segment at 59 to 250 (LERVAGPAEK…KRFDLRGRFH (192 aa)) is N-terminal acylcarrier protein transacylase domain (SAT). Residues 380 to 775 (SEPIAIIGMG…SANTVSSLKE (396 aa)) form the Ketosynthase family 3 (KS3) domain. Catalysis depends on for beta-ketoacyl synthase activity residues Cys547, His682, and His721. Residues 849–1158 (AFGGQVARSV…TGTAALADAT (310 aa)) form a malonyl-CoA:ACP transacylase (MAT) domain region. The active-site For acyl/malonyl transferase activity is the Ser935. Residues 1221–1353 (EEFLTFVKYK…GTVVLRENDT (133 aa)) are N-terminal hotdog fold. The PKS/mFAS DH domain occupies 1221–1530 (EEFLTFVKYK…FTRVQISSLG (310 aa)). The segment at 1251–1525 (FVKGHAVLAE…ILGAHFTRVQ (275 aa)) is product template (PT) domain. His1255 (proton acceptor; for dehydratase activity) is an active-site residue. The interval 1379 to 1530 (DCHILQGPVV…FTRVQISSLG (152 aa)) is C-terminal hotdog fold. Asp1437 serves as the catalytic Proton donor; for dehydratase activity. One can recognise a Carrier 1 domain in the interval 1574–1651 (RPTLEISEKL…SISKCLASYL (78 aa)). An O-(pantetheine 4'-phosphoryl)serine modification is found at Ser1611. Positions 1659 to 1684 (QPEDLADADSVESDSDMPTGAVTSGI) are disordered. The span at 1662-1673 (DLADADSVESDS) shows a compositional bias: acidic residues. One can recognise a Carrier 2 domain in the interval 1685-1761 (TTPDDAVSRL…DLIALVPALN (77 aa)). Ser1721 is subject to O-(pantetheine 4'-phosphoryl)serine. The interval 1976-2075 (LELGGGTGGT…IHRMLRPDGF (100 aa)) is methyltransferase (CMeT) domain. Residues 2200–2514 (LMIHGGGHIM…RGYDFLKEEV (315 aa)) are thioesterase (TE) domain.

It depends on pantetheine 4'-phosphate as a cofactor.

The enzyme catalyses 3 malonyl-CoA + acetyl-CoA + S-adenosyl-L-methionine + H(+) = 3-methylorsellinate + S-adenosyl-L-homocysteine + 3 CO2 + 4 CoA. It participates in phytotoxin biosynthesis. Its function is as follows. Non-reducing polyketide synthase; part of the gene cluster that mediates the biosynthesis of cichorine, a phytotoxin active against knapweed, corn, and soybeans. The first step in the pathway is performed by the non-reducing polyketide synthase pkbA that condenses one acetyl-CoA starter unit with 3 malonyl-CoA units. PkbA also catalyzes one methylation step to produce 3-methylorsellinate. The nonribosomal peptide synthase-like protein cicB, the cytochrome P450 monooxygenase cicH and the O-methyltransferase cicE are involved in the conversion of 3-methylorsellinate into nidulol. CicB converts 3-methylorsellinate to a yet unidentified intermediate, cicH may play a ring-closing role for cichorine and cicE is plausibly responsible for the methylation of one of the phenol groups. The oxidoreductase cicC acts downstream with still unidentified enzymes to further convert nidulol into cichorin. This Emericella nidulans (strain FGSC A4 / ATCC 38163 / CBS 112.46 / NRRL 194 / M139) (Aspergillus nidulans) protein is Non-reducing polyketide synthase pkbA.